Here is a 202-residue protein sequence, read N- to C-terminus: Thymidine kinase (202 aa).

Residues 16 to 23 (GPMFSGKS) and 99 to 102 (DEVQ) each bind ATP. The active-site Proton acceptor is the Glu100. The Zn(2+) site is built by Cys156, Cys159, Cys194, and His197.

The protein belongs to the thymidine kinase family. Homotetramer.

The protein resides in the cytoplasm. It carries out the reaction thymidine + ATP = dTMP + ADP + H(+). The polypeptide is Thymidine kinase (Deinococcus deserti (strain DSM 17065 / CIP 109153 / LMG 22923 / VCD115)).